We begin with the raw amino-acid sequence, 271 residues long: uncharacterized protein (271 aa).

Disordered regions lie at residues 50 to 93 (KKKT…SSSL) and 128 to 233 (KNNY…RKKV). Composition is skewed to low complexity over residues 61-93 (SPTK…SSSL) and 129-165 (NNYN…NNNN). Residues 169–179 (TDKKEGEKNEN) show a composition bias toward basic and acidic residues. 2 stretches are compositionally biased toward acidic residues: residues 180 to 199 (ENEN…DIIE) and 207 to 217 (MDEELENEQVE).

This is an uncharacterized protein from Dictyostelium discoideum (Social amoeba).